Here is a 189-residue protein sequence, read N- to C-terminus: GTPase NRas (189 aa).

Residues 10–18 and 29–30 contribute to the GTP site; these read GAGGVGKSA and VD. The short motif at 32–40 is the Effector region element; it reads YDPTIEDSY. (Microbial infection) O-linked (Glc) threonine; by P.sordellii toxin TcsL glycosylation is present at threonine 35. 57–61 is a binding site for GTP; it reads DTAGQ. Serine 89 carries the phosphoserine modification. Residue 116-119 coordinates GTP; it reads NKCD. The interval 166 to 185 is hypervariable region; the sequence is YRMKKLNSSDDGTQGCMGLP. Residue lysine 170 forms a Glycyl lysine isopeptide (Lys-Gly) (interchain with G-Cter in ubiquitin) linkage. The S-palmitoyl cysteine moiety is linked to residue cysteine 181. Cysteine 186 carries S-farnesyl cysteine lipidation. Residues 187-189 constitute a propeptide, removed in mature form; it reads VVM.

Belongs to the small GTPase superfamily. Ras family. As to quaternary structure, interacts (active GTP-bound form preferentially) with RGS14. Interacts (active GTP-bound form) with RASSF7. Interacts (active GTP-bound form) with both SHOC2 and PP1c (all isoforms) to form a tertiary complex; SHOC2 and PP1c preferably bind M-Ras/MRAS, but they also bind K-Ras/KRAS, N-Ras/NRAS and H-Ras/HRAS. Palmitoylated by the ZDHHC9-GOLGA7 complex. Depalmitoylated by ABHD17A, ABHD17B and ABHD17C. A continuous cycle of de- and re-palmitoylation regulates rapid exchange between plasma membrane and Golgi. Post-translationally, acetylation at Lys-104 prevents interaction with guanine nucleotide exchange factors (GEFs). In terms of processing, fatty-acylated at Lys-169 and/or Lys-170. Ubiquitinated by the BCR(LZTR1) E3 ubiquitin ligase complex at Lys-170 in a non-degradative manner, leading to inhibit Ras signaling by decreasing Ras association with membranes. Post-translationally, phosphorylation at Ser-89 enhances NRAS association with its downstream effectors. In terms of processing, (Microbial infection) Glucosylated at Thr-35 by P.sordellii toxin TcsL.

It is found in the cell membrane. The protein resides in the golgi apparatus membrane. It carries out the reaction GTP + H2O = GDP + phosphate + H(+). Alternates between an inactive form bound to GDP and an active form bound to GTP. Activated by a guanine nucleotide-exchange factor (GEF) and inactivated by a GTPase-activating protein (GAP). Ras proteins bind GDP/GTP and possess intrinsic GTPase activity. This chain is GTPase NRas (NRAS), found in Homo sapiens (Human).